The primary structure comprises 205 residues: Glycerol-3-phosphate acyltransferase (205 aa).

Topologically, residues 1–3 (MSA) are periplasmic. Residues 4 to 24 (IAPGMILFAYLCGSISSAILV) form a helical membrane-spanning segment. Residues 25 to 52 (CRIAGLPDPRESGSGNPGATNVLRIGGK) are Cytoplasmic-facing. Residues 53–73 (GAAVAVLIFDILKGMLPVWGA) traverse the membrane as a helical segment. The Periplasmic segment spans residues 74 to 80 (YALGVTP). Residues 81-101 (FWLGLIAIAACLGHIWPVFFG) traverse the membrane as a helical segment. Residues 102–111 (FKGGKGVATA) lie on the Cytoplasmic side of the membrane. Residues 112 to 132 (FGAIAPIGWDLTGVMAGTWLL) traverse the membrane as a helical segment. Residues 133–137 (TVLLS) lie on the Periplasmic side of the membrane. A helical membrane pass occupies residues 138-158 (GYSSLGAIVSALIAPFYVWWF). Topologically, residues 159-205 (KPQFTFPVSMLSCLILLRHHDNIQRLWRRQETKIWTKLKKKRQKDSE) are cytoplasmic.

This sequence belongs to the PlsY family. In terms of assembly, probably interacts with PlsX.

It is found in the cell inner membrane. The catalysed reaction is sn-glycerol 3-phosphate + an acyl-CoA = a 1-acyl-sn-glycero-3-phosphate + CoA. It carries out the reaction a fatty acyl-[ACP] + sn-glycerol 3-phosphate = a 1-acyl-sn-glycero-3-phosphate + holo-[ACP]. It functions in the pathway lipid metabolism; phospholipid metabolism. Catalyzes the transfer of an acyl group from acyl-ACP to glycerol-3-phosphate (G3P) to form lysophosphatidic acid (LPA). This enzyme can also utilize acyl-CoA as fatty acyl donor, but not acyl-PO(4). This chain is Glycerol-3-phosphate acyltransferase, found in Salmonella schwarzengrund (strain CVM19633).